The chain runs to 894 residues: Tyrosine-protein kinase receptor UFO (894 aa).

A signal peptide spans 1-25 (MAWRCPRMGRVPLAWCLALCGWACM). The segment at 26-92 (APRGTQAEES…QTQVPLGEDE (67 aa)) is interaction with GAS6. The Extracellular segment spans residues 26 to 451 (APRGTQAEES…STPAFSWPWW (426 aa)). Ig-like C2-type domains are found at residues 27 to 128 (PRGT…TFVS) and 139 to 222 (PYFL…ATIT). Asn43 carries an N-linked (GlcNAc...) asparagine glycan. Cys56 and Cys117 are joined by a disulfide. N-linked (GlcNAc...) asparagine glycosylation is found at Asn157 and Asn198. Residues Cys160 and Cys205 are joined by a disulfide bond. Fibronectin type-III domains lie at 227–331 (QPRN…TPEG) and 336–428 (PPEN…AWRP). N-linked (GlcNAc...) asparagine glycans are attached at residues Asn339, Asn345, and Asn401. Residues 452 to 472 (YVLLGAVVAAACVLILALFLV) form a helical membrane-spanning segment. Residues 473–894 (HRRKKETRYG…PAAPGQEDGA (422 aa)) lie on the Cytoplasmic side of the membrane. The 272-residue stretch at 536 to 807 (VALGKTLGEG…ELREDLENTL (272 aa)) folds into the Protein kinase domain. ATP-binding positions include 542–550 (LGEGEFGAV) and Lys567. Residue Asp672 is the Proton acceptor of the active site. A phosphotyrosine; by autocatalysis mark is found at Tyr703, Tyr779, and Tyr821. Disordered stretches follow at residues 823–853 (NMDE…DSCS) and 866–894 (YVLC…EDGA). Residue Tyr866 is modified to Phosphotyrosine; by autocatalysis. Ser884 carries the post-translational modification Phosphoserine.

The protein belongs to the protein kinase superfamily. Tyr protein kinase family. AXL/UFO subfamily. As to quaternary structure, heterodimer and heterotetramer with ligand GAS6. Interacts with CBL, GRB2, LCK, NCK2, PIK3R1, PIK3R2, PIK3R3, PLCG1, SOCS1 and TNS2. Part of a complex including AXL, TNK2 and GRB2, in which GRB2 promotes AXL recruitment by TNK2. In terms of processing, monoubiquitinated upon GAS6-binding. A very small proportion of the receptor could be subjected to polyubiquitination in a very transient fashion. Phosphorylated at tyrosine residues by autocatalysis, which activates kinase activity. As to expression, highly expressed in metastatic colon tumors. Expressed in primary colon tumors. Weakly expressed in normal colon tissue.

The protein localises to the cell membrane. It carries out the reaction L-tyrosyl-[protein] + ATP = O-phospho-L-tyrosyl-[protein] + ADP + H(+). Activated by GAS6-binding and subsequent autophosphorylation. Functionally, receptor tyrosine kinase that transduces signals from the extracellular matrix into the cytoplasm by binding growth factor GAS6 and which is thus regulating many physiological processes including cell survival, cell proliferation, migration and differentiation. Ligand binding at the cell surface induces dimerization and autophosphorylation of AXL. Following activation by ligand, AXL binds and induces tyrosine phosphorylation of PI3-kinase subunits PIK3R1, PIK3R2 and PIK3R3; but also GRB2, PLCG1, LCK and PTPN11. Other downstream substrate candidates for AXL are CBL, NCK2, SOCS1 and TNS2. Recruitment of GRB2 and phosphatidylinositol 3 kinase regulatory subunits by AXL leads to the downstream activation of the AKT kinase. GAS6/AXL signaling plays a role in various processes such as endothelial cell survival during acidification by preventing apoptosis, optimal cytokine signaling during human natural killer cell development, hepatic regeneration, gonadotropin-releasing hormone neuron survival and migration, platelet activation, or regulation of thrombotic responses. Also plays an important role in inhibition of Toll-like receptors (TLRs)-mediated innate immune response. Its function is as follows. (Microbial infection) Acts as a receptor for lassa virus and lymphocytic choriomeningitis virus, possibly through GAS6 binding to phosphatidyl-serine at the surface of virion envelope. In terms of biological role, (Microbial infection) Acts as a receptor for Ebolavirus, possibly through GAS6 binding to phosphatidyl-serine at the surface of virion envelope. (Microbial infection) Promotes Zika virus entry in glial cells, Sertoli cells and astrocytes. Additionally, Zika virus potentiates AXL kinase activity to antagonize type I interferon signaling and thereby promotes infection. Interferon signaling inhibition occurs via an SOCS1-dependent mechanism. In Homo sapiens (Human), this protein is Tyrosine-protein kinase receptor UFO (AXL).